The sequence spans 324 residues: FCS-Like Zinc finger 11 (324 aa).

The FLZ-type zinc finger occupies asparagine 266–leucine 309.

Belongs to the FLZ family. In terms of assembly, interacts with KIN10 and KIN11 via its FLZ-type zinc finger domain. Forms heterodimer with FLZ2 in vitro.

The protein resides in the cytoplasm. Its subcellular location is the nucleus. Functionally, may act as an adapter to facilitate the interaction of SnRK1 complex with effector proteins, conferring tissue- and stimulus-type specific differences in the SnRK1 regulation pathway. This chain is FCS-Like Zinc finger 11, found in Arabidopsis thaliana (Mouse-ear cress).